Consider the following 854-residue polypeptide: Envelope glycoprotein B (854 aa).

Positions methionine 1–cysteine 22 are cleaved as a signal peptide. The Virion surface segment spans residues glutamine 23–proline 732. N-linked (GlcNAc...) asparagine; by host glycosylation is present at asparagine 51. Cystine bridges form between cysteine 69-cysteine 527, cysteine 86-cysteine 483, cysteine 158-cysteine 223, cysteine 315-cysteine 362, and cysteine 552-cysteine 589. An involved in fusion and/or binding to host membrane region spans residues isoleucine 125–alanine 131. N-linked (GlcNAc...) asparagine; by host glycosylation is present at asparagine 180. The interval glycine 209–arginine 217 is involved in fusion and/or binding to host membrane. Residues asparagine 258 and asparagine 311 are each glycosylated (N-linked (GlcNAc...) asparagine; by host). N-linked (GlcNAc...) asparagine; by host glycans are attached at residues asparagine 364, asparagine 379, asparagine 385, asparagine 424, asparagine 564, and asparagine 630. Residues glutamine 422–serine 443 are disordered. The interval leucine 679–lysine 730 is hydrophobic membrane proximal region. A helical membrane pass occupies residues phenylalanine 733 to asparagine 753. Residues arginine 754–proline 854 lie on the Intravirion side of the membrane. The span at histidine 802–glutamate 813 shows a compositional bias: basic and acidic residues. Positions histidine 802–alanine 829 are disordered. The Internalization motif signature appears at tyrosine 839–leucine 842.

The protein belongs to the herpesviridae glycoprotein B family. As to quaternary structure, homotrimer; disulfide-linked. Binds to heparan sulfate proteoglycans. Interacts with gH/gL heterodimer. A proteolytic cleavage by host furin generates two subunits that remain linked by disulfide bonds.

It localises to the virion membrane. The protein localises to the host cell membrane. The protein resides in the host endosome membrane. It is found in the host Golgi apparatus membrane. Functionally, envelope glycoprotein that forms spikes at the surface of virion envelope. Essential for the initial attachment to heparan sulfate moieties of the host cell surface proteoglycans. Involved in fusion of viral and cellular membranes leading to virus entry into the host cell. Following initial binding to its host receptors, membrane fusion is mediated by the fusion machinery composed at least of gB and the heterodimer gH/gL. May be involved in the fusion between the virion envelope and the outer nuclear membrane during virion egress. The polypeptide is Envelope glycoprotein B (Connochaetes taurinus (Blue wildebeest)).